We begin with the raw amino-acid sequence, 275 residues long: Seminase (275 aa).

The N-terminal stretch at 1–19 (MKRLLFLFLLAGILINNHA) is a signal peptide. An N-linked (GlcNAc...) asparagine glycan is attached at N23. A Peptidase S1 domain is found at 44 to 268 (VIGGRVTTNA…VKPFIVKGIK (225 aa)). The cysteines at positions 70 and 86 are disulfide-linked. Active-site charge relay system residues include H85 and D131. Disulfide bonds link C194/C210 and C220/C244. Catalysis depends on S224, which acts as the Charge relay system.

The protein belongs to the peptidase S1 family. In terms of processing, undergoes cleavage in the male during mating with a cleaved product detected in the ejaculatory duct and/or bulb of males by 8-10 minutes after the start of mating. Further cleavage occurs in the mated female. Produced in the male accessory glands and secreted into seminal fluid.

It is found in the secreted. Seminal fluid protease which is required for cleavage and probably also activation of the metalloprotease Semp1. Also required for a number of female post-mating responses independent of Semp1 including egg laying and sperm usage. This Drosophila melanogaster (Fruit fly) protein is Seminase.